The following is a 264-amino-acid chain: 3-methyl-2-oxobutanoate hydroxymethyltransferase (264 aa).

2 residues coordinate Mg(2+): aspartate 42 and aspartate 81. 3-methyl-2-oxobutanoate is bound by residues 42–43 (DS), aspartate 81, and lysine 110. Glutamate 112 contributes to the Mg(2+) binding site. Glutamate 179 (proton acceptor) is an active-site residue.

This sequence belongs to the PanB family. In terms of assembly, homodecamer; pentamer of dimers. It depends on Mg(2+) as a cofactor.

Its subcellular location is the cytoplasm. It catalyses the reaction 3-methyl-2-oxobutanoate + (6R)-5,10-methylene-5,6,7,8-tetrahydrofolate + H2O = 2-dehydropantoate + (6S)-5,6,7,8-tetrahydrofolate. It participates in cofactor biosynthesis; (R)-pantothenate biosynthesis; (R)-pantoate from 3-methyl-2-oxobutanoate: step 1/2. Catalyzes the reversible reaction in which hydroxymethyl group from 5,10-methylenetetrahydrofolate is transferred onto alpha-ketoisovalerate to form ketopantoate. The chain is 3-methyl-2-oxobutanoate hydroxymethyltransferase from Francisella tularensis subsp. tularensis (strain FSC 198).